Here is a 618-residue protein sequence, read N- to C-terminus: Proline--tRNA ligase (618 aa).

The protein belongs to the class-II aminoacyl-tRNA synthetase family. ProS type 1 subfamily. As to quaternary structure, homodimer.

The protein resides in the cytoplasm. It carries out the reaction tRNA(Pro) + L-proline + ATP = L-prolyl-tRNA(Pro) + AMP + diphosphate. Catalyzes the attachment of proline to tRNA(Pro) in a two-step reaction: proline is first activated by ATP to form Pro-AMP and then transferred to the acceptor end of tRNA(Pro). As ProRS can inadvertently accommodate and process non-cognate amino acids such as alanine and cysteine, to avoid such errors it has two additional distinct editing activities against alanine. One activity is designated as 'pretransfer' editing and involves the tRNA(Pro)-independent hydrolysis of activated Ala-AMP. The other activity is designated 'posttransfer' editing and involves deacylation of mischarged Ala-tRNA(Pro). The misacylated Cys-tRNA(Pro) is not edited by ProRS. The chain is Proline--tRNA ligase from Streptococcus pyogenes serotype M4 (strain MGAS10750).